Consider the following 278-residue polypeptide: Protein NIF3 homolog (278 aa).

Belongs to the GTP cyclohydrolase I type 2/NIF3 family.

The sequence is that of Protein NIF3 homolog from Schizosaccharomyces pombe (strain 972 / ATCC 24843) (Fission yeast).